A 427-amino-acid polypeptide reads, in one-letter code: Dihydroorotase (427 aa).

Residues H60 and H62 each contribute to the Zn(2+) site. Substrate is bound by residues 62-64 (HLR) and N94. Residues D151, H178, and H231 each contribute to the Zn(2+) site. N277 lines the substrate pocket. D304 provides a ligand contact to Zn(2+). D304 is a catalytic residue. Substrate contacts are provided by residues H308 and 322–323 (FG).

Belongs to the metallo-dependent hydrolases superfamily. DHOase family. Class I DHOase subfamily. Zn(2+) is required as a cofactor.

It carries out the reaction (S)-dihydroorotate + H2O = N-carbamoyl-L-aspartate + H(+). It participates in pyrimidine metabolism; UMP biosynthesis via de novo pathway; (S)-dihydroorotate from bicarbonate: step 3/3. Its function is as follows. Catalyzes the reversible cyclization of carbamoyl aspartate to dihydroorotate. This Pelotomaculum thermopropionicum (strain DSM 13744 / JCM 10971 / SI) protein is Dihydroorotase.